The chain runs to 494 residues: 2,3-bisphosphoglycerate-independent phosphoglycerate mutase (494 aa).

Mn(2+)-binding residues include aspartate 12 and serine 62. Residue serine 62 is the Phosphoserine intermediate of the active site. Residues histidine 121, 150-151 (RD), arginine 181, arginine 187, 252-255 (RSDR), and lysine 317 contribute to the substrate site. Positions 384, 388, 425, 426, and 443 each coordinate Mn(2+).

This sequence belongs to the BPG-independent phosphoglycerate mutase family. As to quaternary structure, monomer. It depends on Mn(2+) as a cofactor.

The catalysed reaction is (2R)-2-phosphoglycerate = (2R)-3-phosphoglycerate. Its pathway is carbohydrate degradation; glycolysis; pyruvate from D-glyceraldehyde 3-phosphate: step 3/5. In terms of biological role, catalyzes the interconversion of 2-phosphoglycerate and 3-phosphoglycerate. This is 2,3-bisphosphoglycerate-independent phosphoglycerate mutase from Anaplasma marginale (strain St. Maries).